We begin with the raw amino-acid sequence, 294 residues long: 33 kDa chaperonin (294 aa).

Cystine bridges form between Cys-238–Cys-240 and Cys-271–Cys-274.

This sequence belongs to the HSP33 family. In terms of processing, under oxidizing conditions two disulfide bonds are formed involving the reactive cysteines. Under reducing conditions zinc is bound to the reactive cysteines and the protein is inactive.

The protein resides in the cytoplasm. Its function is as follows. Redox regulated molecular chaperone. Protects both thermally unfolding and oxidatively damaged proteins from irreversible aggregation. Plays an important role in the bacterial defense system toward oxidative stress. This Staphylococcus carnosus (strain TM300) protein is 33 kDa chaperonin.